Consider the following 319-residue polypeptide: Class I histocompatibility antigen, Non-RT1.A alpha-1 chain (319 aa).

Residues 1 to 24 (MGAMAPRTLLLLLAAVLAPTQTWA) form the signal peptide. Residues 25–114 (GSHSLRYFHT…LLSYYNQSEG (90 aa)) are alpha-1. Over 25–307 (GSHSLRYFHT…WEPSPSTDSN (283 aa)) the chain is Extracellular. An N-linked (GlcNAc...) asparagine glycan is attached at Asn110. Positions 115 to 206 (GSHTIQRMYG…ERGKETLLRS (92 aa)) are alpha-2. 2 disulfide bridges follow: Cys125/Cys188 and Cys227/Cys283. The segment at 207 to 298 (DPPEAHVTLH…GLPEPLSQRW (92 aa)) is alpha-3. The 87-residue stretch at 209 to 295 (PEAHVTLHPR…EHEGLPEPLS (87 aa)) folds into the Ig-like C1-type domain. The N-linked (GlcNAc...) asparagine glycan is linked to Asn280. Residues 299–307 (EPSPSTDSN) form a connecting peptide region. Residues 308–319 (LLLLFLELWQFL) form a helical membrane-spanning segment.

This sequence belongs to the MHC class I family. In terms of assembly, heterodimer of an alpha chain and a beta chain (beta-2-microglobulin).

It localises to the membrane. In terms of biological role, involved in the presentation of foreign antigens to the immune system. The protein is Class I histocompatibility antigen, Non-RT1.A alpha-1 chain (RT1-Aw2) of Rattus norvegicus (Rat).